The primary structure comprises 232 residues: Large ribosomal subunit protein uL1 (232 aa).

It belongs to the universal ribosomal protein uL1 family. As to quaternary structure, part of the 50S ribosomal subunit.

In terms of biological role, binds directly to 23S rRNA. The L1 stalk is quite mobile in the ribosome, and is involved in E site tRNA release. Functionally, protein L1 is also a translational repressor protein, it controls the translation of the L11 operon by binding to its mRNA. This is Large ribosomal subunit protein uL1 from Syntrophus aciditrophicus (strain SB).